Consider the following 185-residue polypeptide: NADH-quinone oxidoreductase subunit B (185 aa).

[4Fe-4S] cluster is bound by residues Cys38, Cys39, Cys104, and Cys133. The span at 165-176 (AAEAYREEERQA) shows a compositional bias: basic and acidic residues. A disordered region spans residues 165–185 (AAEAYREEERQAARSALGPRS).

The protein belongs to the complex I 20 kDa subunit family. In terms of assembly, NDH-1 is composed of 14 different subunits. Subunits NuoB, C, D, E, F, and G constitute the peripheral sector of the complex. Requires [4Fe-4S] cluster as cofactor.

The protein localises to the cell membrane. It catalyses the reaction a quinone + NADH + 5 H(+)(in) = a quinol + NAD(+) + 4 H(+)(out). Its function is as follows. NDH-1 shuttles electrons from NADH, via FMN and iron-sulfur (Fe-S) centers, to quinones in the respiratory chain. The immediate electron acceptor for the enzyme in this species is believed to be ubiquinone. Couples the redox reaction to proton translocation (for every two electrons transferred, four hydrogen ions are translocated across the cytoplasmic membrane), and thus conserves the redox energy in a proton gradient. The protein is NADH-quinone oxidoreductase subunit B of Thermomicrobium roseum (strain ATCC 27502 / DSM 5159 / P-2).